The primary structure comprises 531 residues: Dihydropyrimidinase (531 aa).

Positions 103, 105, and 193 each coordinate Zn(2+). Lysine 193 is modified (N6-carboxylysine). Tyrosine 198 contacts substrate. Zn(2+) is bound by residues histidine 226 and histidine 282. A substrate-binding site is contributed by serine 332. Aspartate 359 provides a ligand contact to Zn(2+). Residue asparagine 380 coordinates substrate.

Belongs to the metallo-dependent hydrolases superfamily. Hydantoinase/dihydropyrimidinase family. As to quaternary structure, homotetramer. It depends on Zn(2+) as a cofactor. Post-translationally, carboxylation allows a single lysine to coordinate two zinc ions.

Its subcellular location is the endoplasmic reticulum. It catalyses the reaction 5,6-dihydrouracil + H2O = 3-(carbamoylamino)propanoate + H(+). Its pathway is amino-acid biosynthesis; beta-alanine biosynthesis. Functionally, catalyzes the second step of the reductive pyrimidine degradation, the reversible hydrolytic ring opening of dihydropyrimidines. Can catalyze the ring opening of 5,6-dihydrouracil to N-carbamoyl-alanine and of 5,6-dihydrothymine to N-carbamoyl-amino isobutyrate. Involved in the recycling of nitrogen from nucleobases to general nitrogen metabolism. The polypeptide is Dihydropyrimidinase (Arabidopsis thaliana (Mouse-ear cress)).